The primary structure comprises 1640 residues: Clathrin heavy chain 2 (1640 aa).

A2 carries the post-translational modification N-acetylalanine. The globular terminal domain stretch occupies residues A2–Y479. WD40-like repeat stretches follow at residues N24 to S67, A68 to E107, V108 to V149, G150 to E195, G196 to Q257, N258 to D301, and T302 to E330. S67 carries the post-translational modification Phosphoserine. Position 184 is a phosphotyrosine (Y184). Phosphothreonine is present on T394. The binding site for the uncoating ATPase, involved in lattice disassembly stretch occupies residues E449–D465. Residues L480–K523 form a flexible linker region. The distal segment stretch occupies residues I524 to Y634. Residues I524 to E1640 form a heavy chain arm region. CHCR repeat units lie at residues V537–V683, A686–V828, I833–D972, L979–A1124, Y1128–A1269, L1274–N1420, and L1423–F1566. Residue Y634 is modified to Phosphotyrosine. The proximal segment stretch occupies residues A639–E1640. Position 737 is an N6-succinyllysine (K737). K856 carries the N6-acetyllysine modification. Y899 bears the Phosphotyrosine mark. S1167 carries the post-translational modification Phosphoserine. Y1206 is modified (phosphotyrosine). The tract at residues A1213–A1522 is involved in binding clathrin light chain. At S1229 the chain carries Phosphoserine. The residue at position 1441 (K1441) is an N6-acetyllysine; alternate. N6-succinyllysine; alternate is present on K1441. Residues Y1477 and Y1487 each carry the phosphotyrosine modification. The residue at position 1494 (S1494) is a Phosphoserine. An N6-acetyllysine modification is found at K1501. Residues Q1551–E1640 form a trimerization region.

The protein belongs to the clathrin heavy chain family. Clathrin triskelions, composed of 3 heavy chains and 3 light chains, are the basic subunits of the clathrin coat. In the presence of light chains, hub assembly is influenced by both the pH and the concentration of calcium. May interact with OCRL. Interacts with AFTPH/aftiphilin. In terms of tissue distribution, maximal levels in skeletal muscle. High levels in heart and testis. Low expression detected in all other tissues.

It is found in the cytoplasmic vesicle membrane. The protein resides in the membrane. Its subcellular location is the coated pit. Its function is as follows. Clathrin is the major protein of the polyhedral coat of coated pits and vesicles. Two different adapter protein complexes link the clathrin lattice either to the plasma membrane or to the trans-Golgi network. This Homo sapiens (Human) protein is Clathrin heavy chain 2 (CLTCL1).